Reading from the N-terminus, the 589-residue chain is Chromodomain Y-like protein (589 aa).

Residues 1–10 (MGLGSSQPST) are compositionally biased toward polar residues. The disordered stretch occupies residues 1–57 (MGLGSSQPSTKEAEPCTLQEKEEHPVDDTRQQNNAVPATVSDPDQVSPAVQDAETQV). A compositionally biased stretch (basic and acidic residues) spans 11–30 (KEAEPCTLQEKEEHPVDDTR). The Chromo domain maps to 55–115 (TQVESIVDKR…RHNERQKEGT (61 aa)). Positions 55–300 (TQVESIVDKR…TIQTSVTGVT (246 aa)) are interaction with EZH2. Ser-82 is modified (phosphoserine). The interval 110-155 (RQKEGTLARANRASPSNARKQISRSTHSALSKTNPKALVVGKDHES) is disordered. The segment covering 117–128 (ARANRASPSNAR) has biased composition (low complexity). Lys-129 is subject to N6,N6,N6-trimethyllysine; by EHMT2; alternate. Lys-129 bears the N6,N6-dimethyllysine; by EHMT2; alternate mark. Lys-129 carries the post-translational modification N6-methyllysine; by EHMT2; alternate. The segment covering 132 to 143 (SRSTHSALSKTN) has biased composition (polar residues). Phosphoserine occurs at positions 164, 195, and 210. The interval 202–224 (SIDGFHGESPEKLDQGAEDTVTP) is disordered. A compositionally biased stretch (basic and acidic residues) spans 206 to 216 (FHGESPEKLDQ). Positions 353 to 585 (SENNSLNPEV…DSMLKYLQRK (233 aa)) are acetyl-CoA-binding domain.

Forms multimers and multimerization is required for stable binding to chromatin. Interacts with HDAC1 and HDAC2 via its C-terminal acetyl-CoA-binding domain. Interacts with EZH2, EED, SUZ12, REST, EHMT1 and EHMT2. Part of a complex containing at least CDYL, REST, WIZ, SETB1, EHMT1 and EHMT2. Part of a complex containing at least CDYL, MIER1, MIER2, HDAC1 and HDAC2. Interacts with CHAF1A and CHAF1B; bridging the CAF-1 complex to the MCM2-7 (MCM) complex. Interacts with MCM3 and MCM5; bridging the CAF-1 complex to the MCM2-7 (MCM) complex. Recruited to Xist RNA-coated X chromosome. Interacts with EHMT2 and PRDM9; interaction only takes place when PRDM9 is bound to hotspot DNA. In terms of tissue distribution, expressed in the brain, with expression in the hippocampal dentate gyrus, CA1, striatum and cortex (at protein level). Expressed in the prelimbic cortex.

It is found in the nucleus. It localises to the chromosome. The catalysed reaction is 3-hydroxybutanoyl-CoA = (2E)-butenoyl-CoA + H2O. Functionally, chromatin reader protein that recognizes and binds histone H3 trimethylated at 'Lys-9', dimethylated at 'Lys-27' and trimethylated at 'Lys-27' (H3K9me3, H3K27me2 and H3K27me3, respectively). Part of multimeric repressive chromatin complexes, where it is required for transmission and restoration of repressive histone marks, thereby preserving the epigenetic landscape. Required for chromatin targeting and maximal enzymatic activity of Polycomb repressive complex 2 (PRC2); acts as a positive regulator of PRC2 activity by bridging the pre-existing histone H3K27me3 and newly recruited PRC2 on neighboring nucleosomes. Acts as a corepressor for REST by facilitating histone-lysine N-methyltransferase EHMT2 recruitment and H3K9 dimethylation at REST target genes for repression. Involved in X chromosome inactivation in females: recruited to Xist RNA-coated X chromosome and facilitates propagation of H3K9me2 by anchoring EHMT2. Promotes EZH2 accumulation and H3K27me3 methylation at DNA double strand breaks (DSBs), thereby facilitating transcriptional repression at sites of DNA damage and homology-directed repair of DSBs. Required for neuronal migration during brain development by repressing expression of RHOA. By repressing the expression of SCN8A, contributes to the inhibition of intrinsic neuronal excitability and epileptogenesis. In addition to acting as a chromatin reader, acts as a hydro-lyase. Shows crotonyl-coA hydratase activity by mediating the conversion of crotonyl-CoA ((2E)-butenoyl-CoA) to beta-hydroxybutyryl-CoA (3-hydroxybutanoyl-CoA), thereby acting as a negative regulator of histone crotonylation. Histone crotonylation is required during spermatogenesis; down-regulation of histone crotonylation by CDYL regulates the reactivation of sex chromosome-linked genes in round spermatids and histone replacement in elongating spermatids. By regulating histone crotonylation and trimethylation of H3K27, may be involved in stress-induced depression-like behaviors, possibly by regulating VGF expression. Displays acetyltransferase activity toward tubulin in vitro; such activity is however unsure in vivo and additional evidences would be required to confirm this result. Not able to recognize and bind histone H3K9me3, histone H3K27me2 and histone H3K27me3, due to the presence of a N-terminal extension that inactivates the chromo domain. In Rattus norvegicus (Rat), this protein is Chromodomain Y-like protein.